The primary structure comprises 397 residues: 2-aminoadipate transaminase (397 aa).

Gly40 contacts substrate. Pyridoxal 5'-phosphate contacts are provided by residues Tyr70, 100–101 (SQ), Asn174, 202–205 (DDAY), 235–237 (SFS), and Arg245. Asn174 contributes to the substrate binding site. The residue at position 263 (Lys263) is an N6-(pyridoxal phosphate)lysine. Substrate is bound at residue Arg368.

It belongs to the class-I pyridoxal-phosphate-dependent aminotransferase family. Homodimer. Requires pyridoxal 5'-phosphate as cofactor.

The enzyme catalyses L-2-aminoadipate + 2-oxoglutarate = 2-oxoadipate + L-glutamate. It participates in amino-acid biosynthesis; L-lysine biosynthesis via AAA pathway; L-alpha-aminoadipate from 2-oxoglutarate: step 5/5. Its function is as follows. Catalyzes the transfer of an amino group between 2-oxoadipate (2-OA) and glutamate (Glu) to yield alpha-aminodipate (AAA). It can also transaminate glutamate, leucine, and aromatic amino acids. It also contributes in the biosynthesis of other amino acids such as leucine. In Thermus thermophilus (strain ATCC BAA-163 / DSM 7039 / HB27), this protein is 2-aminoadipate transaminase (lysN).